Here is a 91-residue protein sequence, read N- to C-terminus: Large ribosomal subunit protein bL27 (91 aa).

Residues 1–22 (MAHKKAGGSSRNGRDSAGRRLG) are disordered.

This sequence belongs to the bacterial ribosomal protein bL27 family.

This chain is Large ribosomal subunit protein bL27, found in Methylocella silvestris (strain DSM 15510 / CIP 108128 / LMG 27833 / NCIMB 13906 / BL2).